A 271-amino-acid chain; its full sequence is ATP synthase subunit a (271 aa).

5 helical membrane passes run 38-58, 100-120, 146-166, 211-231, and 242-262; these read FWTL…LFLA, VIAP…LMDL, DVNI…FYSI, LFGN…LLPW, and AIFH…LTIV.

It belongs to the ATPase A chain family. F-type ATPases have 2 components, CF(1) - the catalytic core - and CF(0) - the membrane proton channel. CF(1) has five subunits: alpha(3), beta(3), gamma(1), delta(1), epsilon(1). CF(0) has three main subunits: a(1), b(2) and c(9-12). The alpha and beta chains form an alternating ring which encloses part of the gamma chain. CF(1) is attached to CF(0) by a central stalk formed by the gamma and epsilon chains, while a peripheral stalk is formed by the delta and b chains.

The protein resides in the cell inner membrane. In terms of biological role, key component of the proton channel; it plays a direct role in the translocation of protons across the membrane. In Klebsiella pneumoniae (strain 342), this protein is ATP synthase subunit a.